A 175-amino-acid chain; its full sequence is Translation initiation factor IF-3 (175 aa).

Belongs to the IF-3 family. In terms of assembly, monomer.

The protein resides in the cytoplasm. In terms of biological role, IF-3 binds to the 30S ribosomal subunit and shifts the equilibrium between 70S ribosomes and their 50S and 30S subunits in favor of the free subunits, thus enhancing the availability of 30S subunits on which protein synthesis initiation begins. The protein is Translation initiation factor IF-3 of Staphylococcus carnosus (strain TM300).